The chain runs to 120 residues: UPF0102 protein HSM_1206 (120 aa).

The protein belongs to the UPF0102 family.

The polypeptide is UPF0102 protein HSM_1206 (Histophilus somni (strain 2336) (Haemophilus somnus)).